A 426-amino-acid chain; its full sequence is Glutamate-1-semialdehyde 2,1-aminomutase (426 aa).

Lys265 bears the N6-(pyridoxal phosphate)lysine mark.

Belongs to the class-III pyridoxal-phosphate-dependent aminotransferase family. HemL subfamily. In terms of assembly, homodimer. It depends on pyridoxal 5'-phosphate as a cofactor.

It is found in the cytoplasm. The catalysed reaction is (S)-4-amino-5-oxopentanoate = 5-aminolevulinate. It participates in porphyrin-containing compound metabolism; protoporphyrin-IX biosynthesis; 5-aminolevulinate from L-glutamyl-tRNA(Glu): step 2/2. This is Glutamate-1-semialdehyde 2,1-aminomutase from Salmonella typhi.